We begin with the raw amino-acid sequence, 464 residues long: ATP-dependent protease ATPase subunit HslU (464 aa).

ATP contacts are provided by residues V18, 60-65, D277, E342, and R414; that span reads GVGKTE.

Belongs to the ClpX chaperone family. HslU subfamily. A double ring-shaped homohexamer of HslV is capped on each side by a ring-shaped HslU homohexamer. The assembly of the HslU/HslV complex is dependent on binding of ATP.

The protein localises to the cytoplasm. Functionally, ATPase subunit of a proteasome-like degradation complex; this subunit has chaperone activity. The binding of ATP and its subsequent hydrolysis by HslU are essential for unfolding of protein substrates subsequently hydrolyzed by HslV. HslU recognizes the N-terminal part of its protein substrates and unfolds these before they are guided to HslV for hydrolysis. The protein is ATP-dependent protease ATPase subunit HslU of Lactobacillus delbrueckii subsp. bulgaricus (strain ATCC 11842 / DSM 20081 / BCRC 10696 / JCM 1002 / NBRC 13953 / NCIMB 11778 / NCTC 12712 / WDCM 00102 / Lb 14).